Here is a 261-residue protein sequence, read N- to C-terminus: Receptor expression-enhancing protein 4 (261 aa).

Helical transmembrane passes span 1–21 (MVSWIISRAVVLVFGLLYPAY) and 35–55 (YVRWMMYWIVFALFMTVETFT). Residues 167–261 (YTDALYPDEP…KKPAQSEPEN (95 aa)) are disordered. Residues 221-230 (KSLQRSQSLR) are compositionally biased toward polar residues.

Belongs to the DP1 family. Interacts with microtubules. In terms of tissue distribution, during gastrulation, expressed on the dorsal side of the embryo and then in the neural plate and neural tube. At tailbud stages, expressed in the somites, neural tube and otic vesicle.

It localises to the endoplasmic reticulum membrane. In terms of biological role, microtubule-binding protein required to ensure proper cell division and nuclear envelope reassembly by sequestering the endoplasmic reticulum away from chromosomes during mitosis. Probably acts by clearing the endoplasmic reticulum membrane from metaphase chromosomes. May play a role in the maintenance of both the nervous system and the musculature. The protein is Receptor expression-enhancing protein 4 (reep4) of Xenopus laevis (African clawed frog).